A 790-amino-acid chain; its full sequence is Pre-mRNA-splicing factor cwf3 (790 aa).

17 HAT repeats span residues 12 to 44 (DLIN…THEG), 45 to 77 (STLE…LRVA), 89 to 121 (EAFA…FLMK), 123 to 157 (PNVT…YAED), 159 to 190 (GGLF…KLGL), 193 to 228 (EAAR…LVVQ), 233 to 266 (TQNI…YYIR), 268 to 303 (GDYE…FEEQ), 331 to 364 (KILD…FLED), 368 to 402 (KVVQ…FYEN), 404 to 440 (DDLE…MELR), 457 to 492 (APRK…LEES), 494 to 526 (GTIE…LLEE), 528 to 562 (AYFE…KFVK), 567 to 601 (THME…FEEK), 639 to 673 (YGVL…METK), and 675 to 709 (GEID…FEIR). The tract at residues 769–790 (LAGFVLSKSNPQETSKITGEEN) is disordered. Polar residues predominate over residues 775-790 (SKSNPQETSKITGEEN).

This sequence belongs to the crooked-neck family. As to quaternary structure, belongs to the 40S cdc5-associated complex (or cwf complex), a spliceosome sub-complex reminiscent of a late-stage spliceosome composed of the U2, U5 and U6 snRNAs and at least brr2, cdc5, cwf2/prp3, cwf3/syf1, cwf4/syf3, cwf5/ecm2, spp42/cwf6, cwf7/spf27, cwf8, cwf9, cwf10, cwf11, cwf12, prp45/cwf13, cwf14, cwf15, cwf16, cwf17, cwf18, cwf19, cwf20, cwf21, cwf22, cwf23, cwf24, cwf25, cwf26, cyp7/cwf27, cwf28, cwf29/ist3, lea1, msl1, prp5/cwf1, prp10, prp12/sap130, prp17, prp22, sap61, sap62, sap114, sap145, slu7, smb1, smd1, smd3, smf1, smg1 and syf2.

The protein resides in the nucleus. Its function is as follows. Involved in pre-mRNA splicing and cell cycle progression. The sequence is that of Pre-mRNA-splicing factor cwf3 (cwf3) from Schizosaccharomyces pombe (strain 972 / ATCC 24843) (Fission yeast).